The following is a 175-amino-acid chain: NADH-quinone oxidoreductase subunit I (175 aa).

4Fe-4S ferredoxin-type domains follow at residues 64-93 and 110-139; these read KRDEQGRENCTACGLCAVSCPAEAITIIAD and SLYEINMLRCIFCGLCEEACPKDAVYLTEE. 8 residues coordinate [4Fe-4S] cluster: Cys73, Cys76, Cys79, Cys83, Cys119, Cys122, Cys125, and Cys129.

The protein belongs to the complex I 23 kDa subunit family. In terms of assembly, NDH-1 is composed of 14 different subunits. Subunits NuoA, H, J, K, L, M, N constitute the membrane sector of the complex. The cofactor is [4Fe-4S] cluster.

The protein localises to the cell inner membrane. It carries out the reaction a quinone + NADH + 5 H(+)(in) = a quinol + NAD(+) + 4 H(+)(out). NDH-1 shuttles electrons from NADH, via FMN and iron-sulfur (Fe-S) centers, to quinones in the respiratory chain. The immediate electron acceptor for the enzyme in this species is believed to be ubiquinone. Couples the redox reaction to proton translocation (for every two electrons transferred, four hydrogen ions are translocated across the cytoplasmic membrane), and thus conserves the redox energy in a proton gradient. In Cytophaga hutchinsonii (strain ATCC 33406 / DSM 1761 / CIP 103989 / NBRC 15051 / NCIMB 9469 / D465), this protein is NADH-quinone oxidoreductase subunit I.